The chain runs to 433 residues: ATP-sensitive inward rectifier potassium channel 12 (433 aa).

At 1-77 (MTAASRANPY…LADMFTTCVD (77 aa)) the chain is on the cytoplasmic side. Cys75 bears the S-nitrosocysteine mark. The helical transmembrane segment at 78–104 (IRWRYMLLIFSLAFLASWLLFGIIFWV) threads the bilayer. Positions 79 and 81 each coordinate a 1,2-diacyl-sn-glycero-3-phospho-(1D-myo-inositol-4,5-bisphosphate). At 105–129 (IAVAHGDLEPAEGRGRTPCVMQVHG) the chain is on the extracellular side. The cysteines at positions 123 and 155 are disulfide-linked. An intramembrane region (helical; Pore-forming) is located at residues 130–146 (FMAAFLFSIETQTTIGY). K(+)-binding residues include Thr143, Ile144, Gly145, and Tyr146. The Selectivity filter motif lies at 143–148 (TIGYGL). Over 147-155 (GLRCVTEEC) the chain is Extracellular. The helical transmembrane segment at 156–183 (PVAVFMVVAQSIVGCIIDSFMIGAIMAK) threads the bilayer. A 1,2-diacyl-sn-glycero-3-phospho-(1D-myo-inositol-4,5-bisphosphate) contacts are provided by Lys183 and Lys188. The Cytoplasmic portion of the chain corresponds to 184–433 (MARPKKRAQT…QRPYRRESEI (250 aa)). Residues 387–433 (DEEDEADGDQDGRSRDGLSPQARHDFDRLQAGGGVLEQRPYRRESEI) form a disordered region. The span at 396-414 (QDGRSRDGLSPQARHDFDR) shows a compositional bias: basic and acidic residues. The PDZ-binding motif lies at 431-433 (SEI).

It belongs to the inward rectifier-type potassium channel (TC 1.A.2.1) family. KCNJ12 subfamily. In terms of assembly, homotetramer. Forms heteromer with KCNJ4. Can form heteromeric channels with Kir2.6/KCNJ18. Association, via its PDZ-recognition domain, with LIN7A, LIN7B, LIN7C, DLG1, CASK and APBA1 plays a key role in its localization and trafficking.

Its subcellular location is the membrane. The protein resides in the cell membrane. It is found in the sarcolemma. It localises to the T-tubule. The catalysed reaction is K(+)(in) = K(+)(out). With respect to regulation, activated by phosphatidylinositol 4,5-biphosphate (PtdIns(4,5)P2). PtdIns(4,5)P2 binding to the cytoplasmic side of the channel triggers a conformation change leading to channel opening. Inhibited by Ba(2+). Functionally, inward rectifying potassium channel that probably participates in controlling the resting membrane potential in electrically excitable cells. Probably participates in establishing action potential waveform and excitability of neuronal and muscle tissues. Inward rectifier potassium channels are characterized by a greater tendency to allow potassium to flow into the cell rather than out of it. Their voltage dependence is regulated by the concentration of extracellular potassium; as external potassium is raised, the voltage range of the channel opening shifts to more positive voltages. The inward rectification is mainly due to the blockage of outward current by internal magnesium. The chain is ATP-sensitive inward rectifier potassium channel 12 (KCNJ12) from Homo sapiens (Human).